A 610-amino-acid polypeptide reads, in one-letter code: Elongation factor 4 (610 aa).

In terms of domain architecture, tr-type G spans 11-193 (EKIRNFSIIA…QIVEKVPAPT (183 aa)). GTP-binding positions include 23 to 28 (DHGKST) and 140 to 143 (NKID).

The protein belongs to the TRAFAC class translation factor GTPase superfamily. Classic translation factor GTPase family. LepA subfamily.

It is found in the cell membrane. The enzyme catalyses GTP + H2O = GDP + phosphate + H(+). In terms of biological role, required for accurate and efficient protein synthesis under certain stress conditions. May act as a fidelity factor of the translation reaction, by catalyzing a one-codon backward translocation of tRNAs on improperly translocated ribosomes. Back-translocation proceeds from a post-translocation (POST) complex to a pre-translocation (PRE) complex, thus giving elongation factor G a second chance to translocate the tRNAs correctly. Binds to ribosomes in a GTP-dependent manner. This is Elongation factor 4 from Streptococcus pyogenes serotype M2 (strain MGAS10270).